A 75-amino-acid chain; its full sequence is Putative membrane protein insertion efficiency factor (75 aa).

This sequence belongs to the UPF0161 family.

Its subcellular location is the cell inner membrane. Could be involved in insertion of integral membrane proteins into the membrane. This chain is Putative membrane protein insertion efficiency factor, found in Leptospira biflexa serovar Patoc (strain Patoc 1 / ATCC 23582 / Paris).